The primary structure comprises 282 residues: Cytochrome c1 (282 aa).

Positions 1–24 are cleaved as a signal peptide; the sequence is MTIKLRFVASLALVFGLAAASVPA. Heme c contacts are provided by cysteine 62, cysteine 65, histidine 66, and methionine 207. A helical transmembrane segment spans residues 253–273; the sequence is WWVLGFLVIFTGLLVATKIVV.

In terms of assembly, the main subunits of complex b-c1 are: cytochrome b, cytochrome c1 and the Rieske protein. Post-translationally, binds 1 heme c group covalently per subunit.

It localises to the cell membrane. Its function is as follows. Component of the ubiquinol-cytochrome c reductase complex (complex III or cytochrome b-c1 complex), which is a respiratory chain that generates an electrochemical potential coupled to ATP synthesis. c1 functions as an electron donor to cytochrome c. The protein is Cytochrome c1 (petC) of Blastochloris viridis (Rhodopseudomonas viridis).